Here is a 458-residue protein sequence, read N- to C-terminus: uncharacterized protein (458 aa).

The 59-residue stretch at 8-66 (PVEKNEFIDVVFEDLTHDGAGVAKVKGYPIFVKNGLPGEEAQIKIIKVKKNFAFGRLMK) folds into the TRAM domain. [4Fe-4S] cluster-binding residues include Cys-79, Cys-85, Cys-88, and Cys-166. Residues Gln-290, Tyr-319, Glu-340, and Asp-388 each coordinate S-adenosyl-L-methionine. The active-site Nucleophile is the Cys-415.

It belongs to the class I-like SAM-binding methyltransferase superfamily. RNA M5U methyltransferase family.

This is an uncharacterized protein from Bacillus cereus (strain ATCC 14579 / DSM 31 / CCUG 7414 / JCM 2152 / NBRC 15305 / NCIMB 9373 / NCTC 2599 / NRRL B-3711).